We begin with the raw amino-acid sequence, 217 residues long: Ribulose-phosphate 3-epimerase (217 aa).

Serine 7 provides a ligand contact to substrate. The a divalent metal cation site is built by histidine 32, aspartate 34, and histidine 65. Aspartate 34 acts as the Proton acceptor in catalysis. Substrate is bound by residues histidine 65, glycine 141–glycine 144, aspartate 175–glycine 177, and glycine 197–serine 198. Aspartate 175 contributes to the a divalent metal cation binding site. Aspartate 175 serves as the catalytic Proton donor.

It belongs to the ribulose-phosphate 3-epimerase family. A divalent metal cation serves as cofactor.

The catalysed reaction is D-ribulose 5-phosphate = D-xylulose 5-phosphate. It participates in carbohydrate degradation. Functionally, catalyzes the reversible epimerization of D-ribulose 5-phosphate to D-xylulose 5-phosphate. The sequence is that of Ribulose-phosphate 3-epimerase from Bacillus subtilis (strain 168).